The primary structure comprises 397 residues: Phosphoglycerate kinase (397 aa).

Residues Asp-21–Asn-23, Arg-37, His-60–Arg-63, Arg-119, and Arg-152 contribute to the substrate site. ATP is bound by residues Lys-203, Gly-294, Glu-325, and Gly-354–Ser-357.

Belongs to the phosphoglycerate kinase family. Monomer.

Its subcellular location is the cytoplasm. The catalysed reaction is (2R)-3-phosphoglycerate + ATP = (2R)-3-phospho-glyceroyl phosphate + ADP. It participates in carbohydrate degradation; glycolysis; pyruvate from D-glyceraldehyde 3-phosphate: step 2/5. This chain is Phosphoglycerate kinase, found in Chlorobium luteolum (strain DSM 273 / BCRC 81028 / 2530) (Pelodictyon luteolum).